Consider the following 28-residue polypeptide: GFLDVLKGVGKAALGAVTHHINNLVNQQ.

In terms of tissue distribution, expressed by the skin glands.

The protein resides in the secreted. Functionally, has antimicrobial activity. The polypeptide is Cruzioseptin-10 (Cruziohyla calcarifer (Splendid leaf frog)).